The sequence spans 192 residues: Molybdenum cofactor cytidylyltransferase (192 aa).

Aspartate 101 is a binding site for Mg(2+).

As to quaternary structure, monomer. Interacts with the Moco-binding chaperone PaoD. It depends on Mg(2+) as a cofactor. The cofactor is Mn(2+).

The enzyme catalyses Mo-molybdopterin + CTP + H(+) = Mo-molybdopterin cytosine dinucleotide + diphosphate. Functionally, transfers a CMP moiety from CTP to Mo-molybdopterin (Mo-MPT) cofactor (Moco or molybdenum cofactor) to form Mo-molybdopterin cytosine dinucleotide (Mo-MCD) cofactor. Is specific for CTP; other nucleotides such as ATP and GTP cannot be utilized. Is also able to convert MPT to MCD in the absence of molybdate, however, with only one catalytic turnover. The polypeptide is Molybdenum cofactor cytidylyltransferase (mocA) (Escherichia coli (strain K12)).